Consider the following 493-residue polypeptide: Insulinoma-associated protein 2 (493 aa).

Residues Met1 to Arg12 show a composition bias toward basic residues. The interval Met1–Arg20 is SNAG domain. A disordered region spans residues Met1 to Gly77. Residues Phe203–Cys223 form a C2H2-type 1; atypical zinc finger. The segment at Tyr231–His253 adopts a C2H2-type 2 zinc-finger fold. The disordered stretch occupies residues Ser248–Ala310. Positions Pro267 to Pro276 are enriched in pro residues. Residues Glu283 to His294 show a composition bias toward basic and acidic residues. 3 consecutive C2H2-type zinc fingers follow at residues Phe354 to His376, Phe398 to His420, and Phe452 to His475.

As to expression, expressed in spleen, stomach, liver, kidney and testis. In the pancreas, expressed in islet cells, including insulin-producing beta-cells, but not in acinar cells (at protein level). In the brain, expressed in the neuronal cells of the cerebral cortex, the Purkinje cells of the cerebellum and the hippocampal region including CA1 and CA3 (at protein level).

It is found in the cytoplasm. The protein localises to the nucleus. Its function is as follows. May function as a growth suppressor or tumor suppressor in liver cells and in certain neurons. This is Insulinoma-associated protein 2 (Insm2) from Mus musculus (Mouse).